The following is a 202-amino-acid chain: MEENNNIYPIFDRMLTRQDKEELLKQRGVMIWFTGLSGSGKSTIAIALERELHKRGLLCRILDGDNIRTGINNNLGFSETDRVENIRRIAEVSKLFIDTGIITIAAFISPNNDIREMAARIVGPDDFLEIFVSTPLAECEKRDVKGLYAKARRGEIKNFTGISAPFEAPEHPALSLDTSVLSLEESVNRLLEIVLPRVSRHE.

Residue 35 to 42 (GLSGSGKS) coordinates ATP. The active-site Phosphoserine intermediate is the serine 109.

It belongs to the APS kinase family.

The catalysed reaction is adenosine 5'-phosphosulfate + ATP = 3'-phosphoadenylyl sulfate + ADP + H(+). The protein operates within sulfur metabolism; hydrogen sulfide biosynthesis; sulfite from sulfate: step 2/3. In terms of biological role, catalyzes the synthesis of activated sulfate. In Bacteroides fragilis (strain ATCC 25285 / DSM 2151 / CCUG 4856 / JCM 11019 / LMG 10263 / NCTC 9343 / Onslow / VPI 2553 / EN-2), this protein is Adenylyl-sulfate kinase.